An 873-amino-acid polypeptide reads, in one-letter code: Leucine--tRNA ligase (873 aa).

The short motif at 42–52 (PYPSGKLHMGH) is the 'HIGH' region element. A disordered region spans residues 624 to 643 (PVEIGGTEKMSKSKNNGVDP). The 'KMSKS' region signature appears at 632-636 (KMSKS). Lys-635 contributes to the ATP binding site.

The protein belongs to the class-I aminoacyl-tRNA synthetase family.

It is found in the cytoplasm. The catalysed reaction is tRNA(Leu) + L-leucine + ATP = L-leucyl-tRNA(Leu) + AMP + diphosphate. The protein is Leucine--tRNA ligase of Pseudomonas paraeruginosa (strain DSM 24068 / PA7) (Pseudomonas aeruginosa (strain PA7)).